A 353-amino-acid chain; its full sequence is Phospho-furanose lactonase (353 aa).

Residues His-24, His-26, Lys-153, His-186, and His-214 each coordinate Zn(2+). The residue at position 153 (Lys-153) is an N6-carboxylysine. 244 to 245 serves as a coordination point for substrate; it reads KY. Position 272 (Asp-272) interacts with Zn(2+). 275–278 contacts substrate; it reads RILY.

It belongs to the metallo-dependent hydrolases superfamily. Phosphotriesterase family. The cofactor is Zn(2+).

The catalysed reaction is a 1,4-lactone + H2O = a 4-hydroxyacid + H(+). It carries out the reaction D-xylono-1,4-lactone 5-phosphate + H2O = 5-phospho-D-xylonate + H(+). The enzyme catalyses L-arabino-1,4-lactone 5-phosphate + H2O = 5-phospho-L-arabinonate + H(+). Functionally, catalyzes the hydrolysis of D-xylono-1,4-lactone-5-phosphate and L-arabino-1,4-lactone-5-phosphate. Also able to hydrolyze carboxy 1,4-lactones. The protein is Phospho-furanose lactonase of Mycoplasmopsis synoviae (strain 53) (Mycoplasma synoviae).